The following is a 250-amino-acid chain: Phosphoribosylaminoimidazole-succinocarboxamide synthase (250 aa).

It belongs to the SAICAR synthetase family.

The catalysed reaction is 5-amino-1-(5-phospho-D-ribosyl)imidazole-4-carboxylate + L-aspartate + ATP = (2S)-2-[5-amino-1-(5-phospho-beta-D-ribosyl)imidazole-4-carboxamido]succinate + ADP + phosphate + 2 H(+). The protein operates within purine metabolism; IMP biosynthesis via de novo pathway; 5-amino-1-(5-phospho-D-ribosyl)imidazole-4-carboxamide from 5-amino-1-(5-phospho-D-ribosyl)imidazole-4-carboxylate: step 1/2. This Bifidobacterium longum subsp. infantis (strain ATCC 15697 / DSM 20088 / JCM 1222 / NCTC 11817 / S12) protein is Phosphoribosylaminoimidazole-succinocarboxamide synthase.